A 1052-amino-acid polypeptide reads, in one-letter code: Multidrug resistance protein MdtB (1052 aa).

A run of 11 helical transmembrane segments spans residues 15-37 (LFILRPVATTLFMIAILLAGIIG), 345-362 (FELLLAIALVVMVIYLFL), 367-389 (ATIIPSIAVPLSLVGTFAAMYFL), 396-418 (LTLMALTIATGFVVDDAIVVIEN), 438-460 (GEIGFTIISLTFSLIAVLIPLLF), 472-494 (FAVTLAVAILISAVVSLTLTPMM), 535-557 (HPWLTLSVAFSTLVLTVILYLLI), 867-889 (LWLIIAAIVAMYIVLGVLYESFI), 909-931 (LMLTGNELDVIAIIGIILLIGIV), 968-990 (ILMTTLAALFGALPLMLSTGVGA), and 1000-1022 (MVGGLIVSQVLTLFTTPVIYLLF). The segment at 1032–1052 (KNRHRDEDIDSSELLNGQEPQ) is disordered.

Belongs to the resistance-nodulation-cell division (RND) (TC 2.A.6) family. MdtB subfamily. In terms of assembly, part of a tripartite efflux system composed of MdtA, MdtB and MdtC. MdtB forms a heteromultimer with MdtC.

It localises to the cell inner membrane. The chain is Multidrug resistance protein MdtB from Yersinia pestis.